A 184-amino-acid polypeptide reads, in one-letter code: Oligoribonuclease (184 aa).

An Exonuclease domain is found at Leu-7 to Leu-170. Tyr-128 is a catalytic residue.

Belongs to the oligoribonuclease family.

The protein resides in the cytoplasm. Its function is as follows. 3'-to-5' exoribonuclease specific for small oligoribonucleotides. The sequence is that of Oligoribonuclease from Hydrogenovibrio crunogenus (strain DSM 25203 / XCL-2) (Thiomicrospira crunogena).